Consider the following 133-residue polypeptide: Major seminal plasma glycoprotein PSP-I (133 aa).

The signal sequence occupies residues 1–24 (MKLGSAIPWALLFSTATLISTGWG). C30 and C51 are oxidised to a cystine. One can recognise a CUB domain in the interval 30–130 (CGGRLTDDYG…SPYEIIFLRD (101 aa)). N71 carries N-linked (GlcNAc...) (complex) asparagine glycosylation. The cysteines at positions 74 and 95 are disulfide-linked.

As to quaternary structure, monomer or heterodimer with PSP-II (depending on the type of glycosylation of PSP-I). In terms of tissue distribution, seminal plasma or sperm.

The protein localises to the secreted. Not yet identified, major porcine seminal plasma protein. Can bind soybean trypsin inhibitor after deglycosylation. The protein is Major seminal plasma glycoprotein PSP-I of Sus scrofa (Pig).